A 187-amino-acid chain; its full sequence is Troponin I, slow skeletal muscle (187 aa).

Pro-2 carries the post-translational modification N-acetylproline. Positions Pro-2 to Arg-48 are involved in binding TNC. A Phosphoserine modification is found at Ser-58. Residues Leu-97–Val-118 form an involved in binding TNC and actin region.

It belongs to the troponin I family. In terms of assembly, binds to actin and tropomyosin. As to expression, highest levels observed in human skeletal muscle (e.g. gastrocnemious muscle), differentiated cultures of primary human muscle cells and rhabdomyosarcoma cells cultured in low serum medium. Expressed in C2 muscle cell myoblasts and myotubes.

Its function is as follows. Troponin I is the inhibitory subunit of troponin, the thin filament regulatory complex which confers calcium-sensitivity to striated muscle actomyosin ATPase activity. The chain is Troponin I, slow skeletal muscle (TNNI1) from Homo sapiens (Human).